Reading from the N-terminus, the 303-residue chain is 2-dehydropantoate 2-reductase (303 aa).

Residues 7–12, K78, N103, and A129 each bind NADP(+); that span reads GPGSLG. Catalysis depends on K185, which acts as the Proton donor. Substrate-binding positions include K185, N189, N193, N203, and 252–255; that span reads NESS. NADP(+) is bound at residue E267.

This sequence belongs to the ketopantoate reductase family.

It is found in the cytoplasm. The catalysed reaction is (R)-pantoate + NAD(+) = 2-dehydropantoate + NADH + H(+). It catalyses the reaction (R)-pantoate + NADP(+) = 2-dehydropantoate + NADPH + H(+). It functions in the pathway cofactor biosynthesis; coenzyme A biosynthesis. Its function is as follows. Catalyzes the NAD(P)H-dependent reduction of ketopantoate into pantoic acid. The protein is 2-dehydropantoate 2-reductase of Halobacterium salinarum (strain ATCC 700922 / JCM 11081 / NRC-1) (Halobacterium halobium).